A 258-amino-acid polypeptide reads, in one-letter code: Agamous-like MADS-box protein AGL3 (258 aa).

An MADS-box domain is found at arginine 3–phenylalanine 57. The region spanning leucine 88–alanine 178 is the K-box domain. Positions serine 186 to alanine 214 are disordered. Residues glutamine 191 to glutamine 200 are compositionally biased toward low complexity. Polar residues predominate over residues glycine 201–proline 210.

In terms of assembly, forms homodimers. Interacts with TT16/AGL32. As to expression, expressed in aerial vegetative organs and flowers, but not in roots. Expressed in flower primordia.

It localises to the nucleus. Functionally, probable transcription factor that binds specifically to the CArG box DNA sequence 5'-CC (A/T)6 GG-3'. Plays an important role in the determination of flower meristem identity. Involved in the specification of sepal identity. Contributes to the development of petals, stamens and carpels. This chain is Agamous-like MADS-box protein AGL3 (AGL3), found in Arabidopsis thaliana (Mouse-ear cress).